The primary structure comprises 277 residues: MGNTIRALVAFIPADRCQNYVVRDLREMPLDKMVDLSGSQLRRFPLHVCSFRELVKLYLSDNHLNSLPPELGQLQNLQILALDFNNFKALPQVVCTLKQLCILYLGNNKLCDLPSELSLLQNLRTLWIEANCLTQLPDVVCELSLLKTLHAGSNALRLLPGQLRRLQELRTIWLSGNRLTDFPTVLLHMPFLEVIDVDWNSIRYFPSLAHLSSLKLVIYDHNPCRNAPKVAKGVRRVGRWAEETPEPDPRKARRYALVREESQELQAPVPLLPPTNS.

LRR repeat units follow at residues 53 to 74 (ELVKLYLSDNHLNSLPPELGQL), 76 to 97 (NLQILALDFNNFKALPQVVCTL), 99 to 120 (QLCILYLGNNKLCDLPSELSLL), 122 to 143 (NLRTLWIEANCLTQLPDVVCEL), 145 to 167 (LLKTLHAGSNALRLLPGQLRRLQ), 168 to 189 (ELRTIWLSGNRLTDFPTVLLHM), and 191 to 212 (FLEVIDVDWNSIRYFPSLAHLS).

It localises to the nucleus. May play important roles in cardiac development and/or cardiac function. The polypeptide is Leucine-rich repeat-containing protein 10 (LRRC10) (Homo sapiens (Human)).